The following is a 307-amino-acid chain: tRNA dimethylallyltransferase 2 (307 aa).

G11 to T18 contributes to the ATP binding site. Position 13 to 18 (T13 to T18) interacts with substrate. The interval D36–Q39 is interaction with substrate tRNA.

The protein belongs to the IPP transferase family. In terms of assembly, monomer. The cofactor is Mg(2+).

The enzyme catalyses adenosine(37) in tRNA + dimethylallyl diphosphate = N(6)-dimethylallyladenosine(37) in tRNA + diphosphate. Functionally, catalyzes the transfer of a dimethylallyl group onto the adenine at position 37 in tRNAs that read codons beginning with uridine, leading to the formation of N6-(dimethylallyl)adenosine (i(6)A). In Phocaeicola vulgatus (strain ATCC 8482 / DSM 1447 / JCM 5826 / CCUG 4940 / NBRC 14291 / NCTC 11154) (Bacteroides vulgatus), this protein is tRNA dimethylallyltransferase 2.